The chain runs to 470 residues: 6-phosphofructo-2-kinase/fructose-2,6-bisphosphatase (470 aa).

Residues 1 to 249 (MAAVASGQLT…VYYLMNTHVT (249 aa)) form a 6-phosphofructo-2-kinase region. Ser-31 carries the post-translational modification Phosphoserine; by PKA. 47 to 55 (GLRRPGKTY) contacts ATP. Arg-80 and Arg-104 together coordinate beta-D-fructose 6-phosphate. The active site involves Asp-130. Beta-D-fructose 6-phosphate is bound by residues Thr-132 and Arg-138. Residue Cys-160 is part of the active site. Residue 169-174 (NIKQVK) participates in ATP binding. The beta-D-fructose 6-phosphate site is built by Lys-174, Arg-195, and Tyr-199. Residues 250–469 (PRAIYLSRHG…AEALVTVPEH (220 aa)) form a fructose-2,6-bisphosphatase region. Arg-257 serves as a coordination point for beta-D-fructose 2,6-bisphosphate. The active-site Tele-phosphohistidine intermediate is His-258. 2 residues coordinate beta-D-fructose 2,6-bisphosphate: Asn-264 and Gly-270. Glu-327 serves as the catalytic Proton donor/acceptor. Beta-D-fructose 2,6-bisphosphate contacts are provided by Tyr-338, Arg-352, Lys-356, Tyr-367, Gln-393, and Arg-397. 349–352 (FALR) contributes to the ATP binding site. Residues 393–397 (QAVMR) and Tyr-429 each bind ATP.

It in the C-terminal section; belongs to the phosphoglycerate mutase family. Homodimer. As to expression, liver.

It carries out the reaction beta-D-fructose 2,6-bisphosphate + H2O = beta-D-fructose 6-phosphate + phosphate. The enzyme catalyses beta-D-fructose 6-phosphate + ATP = beta-D-fructose 2,6-bisphosphate + ADP + H(+). Its activity is regulated as follows. Phosphorylation results in inhibition of the kinase activity. Functionally, synthesis and degradation of fructose 2,6-bisphosphate. This Gallus gallus (Chicken) protein is 6-phosphofructo-2-kinase/fructose-2,6-bisphosphatase.